The following is a 194-amino-acid chain: DNA replication complex GINS protein PSF3 (194 aa).

This sequence belongs to the GINS3/PSF3 family. Component of the GINS complex which is a heterotetramer of SLD5, PSF1, PSF2 and PSF3.

It is found in the nucleus. Functions as part of the GINS complex which plays an essential role in the initiation of DNA replication by binding to DNA replication origins and facilitating the assembly of the DNA replication machinery. This is DNA replication complex GINS protein PSF3 from Saccharomyces cerevisiae (strain ATCC 204508 / S288c) (Baker's yeast).